We begin with the raw amino-acid sequence, 228 residues long: 2,3-bisphosphoglycerate-dependent phosphoglycerate mutase (228 aa).

Substrate is bound by residues 8–15 (RHGQSVWN), 21–22 (SG), Arg58, 111–114 (ERMY), Lys122, 138–139 (RR), and 182–183 (GN). His9 acts as the Tele-phosphohistidine intermediate in catalysis. The active-site Proton donor/acceptor is Glu111.

Belongs to the phosphoglycerate mutase family. BPG-dependent PGAM subfamily.

It catalyses the reaction (2R)-2-phosphoglycerate = (2R)-3-phosphoglycerate. It functions in the pathway carbohydrate degradation; glycolysis; pyruvate from D-glyceraldehyde 3-phosphate: step 3/5. Functionally, catalyzes the interconversion of 2-phosphoglycerate and 3-phosphoglycerate. The chain is 2,3-bisphosphoglycerate-dependent phosphoglycerate mutase from Chlamydia pneumoniae (Chlamydophila pneumoniae).